The primary structure comprises 395 residues: Elongation factor Tu (395 aa).

The 195-residue stretch at 10 to 204 folds into the tr-type G domain; the sequence is KPHVNVGTIG…AVDEYIPEPT (195 aa). Positions 19–26 are G1; that stretch reads GHVDHGKT. A GTP-binding site is contributed by 19 to 26; that stretch reads GHVDHGKT. T26 is a binding site for Mg(2+). Positions 60 to 64 are G2; that stretch reads GITIA. Positions 81-84 are G3; the sequence is DCPG. GTP is bound by residues 81 to 85 and 136 to 139; these read DCPGH and NKVD. Positions 136-139 are G4; it reads NKVD. Positions 174-176 are G5; sequence SAL.

The protein belongs to the TRAFAC class translation factor GTPase superfamily. Classic translation factor GTPase family. EF-Tu/EF-1A subfamily. Monomer.

It localises to the cytoplasm. The enzyme catalyses GTP + H2O = GDP + phosphate + H(+). GTP hydrolase that promotes the GTP-dependent binding of aminoacyl-tRNA to the A-site of ribosomes during protein biosynthesis. The polypeptide is Elongation factor Tu (Exiguobacterium sibiricum (strain DSM 17290 / CCUG 55495 / CIP 109462 / JCM 13490 / 255-15)).